Reading from the N-terminus, the 268-residue chain is Universal stress protein MT3220 (268 aa).

ATP contacts are provided by residues Gly-13, 107 to 113 (GSVGLDH), Arg-117, and 120 to 121 (SV).

Belongs to the universal stress protein A family.

The protein is Universal stress protein MT3220 of Mycobacterium tuberculosis (strain CDC 1551 / Oshkosh).